We begin with the raw amino-acid sequence, 131 residues long: Large ribosomal subunit protein mL60 (131 aa).

The N-terminal 12 residues, 1–12 (MFGPFKLTSPVA), are a transit peptide targeting the mitochondrion.

It belongs to the mitochondrion-specific ribosomal protein mL60 family. In terms of assembly, component of the mitochondrial large ribosomal subunit (mt-LSU). Mature yeast 74S mitochondrial ribosomes consist of a small (37S) and a large (54S) subunit. The 37S small subunit contains a 15S ribosomal RNA (15S mt-rRNA) and 34 different proteins. The 54S large subunit contains a 21S rRNA (21S mt-rRNA) and 46 different proteins.

Its subcellular location is the mitochondrion. Its function is as follows. Component of the mitochondrial ribosome (mitoribosome), a dedicated translation machinery responsible for the synthesis of mitochondrial genome-encoded proteins, including at least some of the essential transmembrane subunits of the mitochondrial respiratory chain. The mitoribosomes are attached to the mitochondrial inner membrane and translation products are cotranslationally integrated into the membrane. This is Large ribosomal subunit protein mL60 (MRPL31) from Saccharomyces cerevisiae (strain ATCC 204508 / S288c) (Baker's yeast).